The primary structure comprises 1553 residues: ABC-type transporter cctS (1553 aa).

The next 4 helical transmembrane spans lie at 27 to 47 (LIPL…YFHA), 90 to 110 (LEVA…IFSG), 114 to 134 (DLTS…ILFV), and 151 to 171 (SVLY…AILG). A glycan (N-linked (GlcNAc...) asparagine) is linked at asparagine 176. 5 helical membrane passes run 177-197 (FTIA…FHWT), 286-306 (LLWQ…PPVL), 324-344 (TAWL…VAGC), 413-433 (GYLY…TYLL), and 438-458 (GISG…NILI). The 290-residue stretch at 293–582 (ATLNSFAVFV…IADAITFLLR (290 aa)) folds into the ABC transmembrane type-1 1 domain. The N-linked (GlcNAc...) asparagine glycan is linked to asparagine 524. Transmembrane regions (helical) follow at residues 527–547 (TFFS…TVVW) and 550–570 (SMGT…RIPF). Asparagine 617 carries an N-linked (GlcNAc...) asparagine glycan. One can recognise an ABC transporter 1 domain in the interval 635–874 (NKRSDIQLTE…GRIDADIMQN (240 aa)). 670 to 677 (GPSGSGKS) provides a ligand contact to ATP. Asparagine 725 carries N-linked (GlcNAc...) asparagine glycosylation. A helical membrane pass occupies residues 948 to 970 (WYWVLVLFMFGIQQFISLATNIW). The region spanning 951 to 1255 (VLVLFMFGIQ…FVQLYAIVQQ (305 aa)) is the ABC transmembrane type-1 2 domain. Asparagine 992 is a glycosylation site (N-linked (GlcNAc...) asparagine). Residues 1017 to 1037 (IYVAICLAYAFFTFARDLIVF) form a helical membrane-spanning segment. Asparagine 1085 is a glycosylation site (N-linked (GlcNAc...) asparagine). 4 helical membrane-spanning segments follow: residues 1086 to 1108 (ISTF…VFIS), 1113 to 1135 (AFLI…FING), 1204 to 1224 (FLGS…LESV), and 1229 to 1249 (AALV…FVQL). In terms of domain architecture, ABC transporter 2 spans 1294 to 1533 (VRFDAYTTRY…DDDGIFRRLC (240 aa)). 1328 to 1335 (GRTGAGKS) contacts ATP.

Belongs to the ABC transporter superfamily.

It is found in the membrane. The protein operates within mycotoxin biosynthesis. Functionally, ABC-type transporter; part of the gene cluster that mediates the biosynthesis of the mycotoxin cyclochlorotine, a hepatotoxic and carcinogenic cyclic chlorinated pentapeptide. CctS is essential for the biosynthesis of cyclochlorotine, maybe as a chloride channel that supplies chloride for chlorination by cctP2. The protein is ABC-type transporter cctS of Talaromyces islandicus (Penicillium islandicum).